A 277-amino-acid chain; its full sequence is Large ribosomal subunit protein uL2 (277 aa).

Disordered stretches follow at residues 28–55 (EPEK…RHRG) and 207–277 (KAGR…RTQG). 3 stretches are compositionally biased toward basic residues: residues 34–43 (THHKHSKQGR), 209–220 (GRTRHRGQRPHV), and 255–265 (LGRKTRNKKKR).

The protein belongs to the universal ribosomal protein uL2 family. In terms of assembly, part of the 50S ribosomal subunit. Forms a bridge to the 30S subunit in the 70S ribosome.

Its function is as follows. One of the primary rRNA binding proteins. Required for association of the 30S and 50S subunits to form the 70S ribosome, for tRNA binding and peptide bond formation. It has been suggested to have peptidyltransferase activity; this is somewhat controversial. Makes several contacts with the 16S rRNA in the 70S ribosome. In Microcystis aeruginosa (strain NIES-843 / IAM M-2473), this protein is Large ribosomal subunit protein uL2.